A 231-amino-acid polypeptide reads, in one-letter code: NADH-ubiquinone oxidoreductase chain 4 (231 aa).

Transmembrane regions (helical) follow at residues 1–21 (PIAGSMVLAAILLKLGGYGII), 34–54 (MFLPFIVLALWGAILANLTCL), 63–85 (IAYSSVSHMGLVVAAIIIQTPWG), 89–111 (AMALMIAHGFTSSALFCLANTTY), 128–148 (ILPMTTTWWLLANLMNIATPP), and 156–176 (LLIMSALFNWCPTTIIMLGLS).

The protein belongs to the complex I subunit 4 family.

The protein localises to the mitochondrion membrane. It carries out the reaction a ubiquinone + NADH + 5 H(+)(in) = a ubiquinol + NAD(+) + 4 H(+)(out). Functionally, core subunit of the mitochondrial membrane respiratory chain NADH dehydrogenase (Complex I) that is believed to belong to the minimal assembly required for catalysis. Complex I functions in the transfer of electrons from NADH to the respiratory chain. The immediate electron acceptor for the enzyme is believed to be ubiquinone. The protein is NADH-ubiquinone oxidoreductase chain 4 (MT-ND4) of Trimeresurus stejnegeri (Chinese green tree viper).